The primary structure comprises 363 residues: Large ribosomal subunit protein uL4B (363 aa).

The C-terminal-extended nuclear localization signal stretch occupies residues 280 to 363 (PENIISNADV…EKFLSVLHEN (84 aa)).

The protein belongs to the universal ribosomal protein uL4 family. In terms of assembly, component of the large ribosomal subunit (LSU). Mature yeast ribosomes consist of a small (40S) and a large (60S) subunit. The 40S small subunit contains 1 molecule of ribosomal RNA (18S rRNA) and at least 33 different proteins. The large 60S subunit contains 3 rRNA molecules (25S, 5.8S and 5S rRNA) and at least 46 different proteins. uL4 is associated with the polypeptide exit tunnel. uL4 interacts with its chaperone ACL4 and the nuclear import receptor KAP104.

Its subcellular location is the cytoplasm. In terms of biological role, component of the ribosome, a large ribonucleoprotein complex responsible for the synthesis of proteins in the cell. The small ribosomal subunit (SSU) binds messenger RNAs (mRNAs) and translates the encoded message by selecting cognate aminoacyl-transfer RNA (tRNA) molecules. The large subunit (LSU) contains the ribosomal catalytic site termed the peptidyl transferase center (PTC), which catalyzes the formation of peptide bonds, thereby polymerizing the amino acids delivered by tRNAs into a polypeptide chain. The nascent polypeptides leave the ribosome through a tunnel in the LSU and interact with protein factors that function in enzymatic processing, targeting, and the membrane insertion of nascent chains at the exit of the ribosomal tunnel. This Schizosaccharomyces pombe (strain 972 / ATCC 24843) (Fission yeast) protein is Large ribosomal subunit protein uL4B (rpl401).